A 329-amino-acid polypeptide reads, in one-letter code: Very long chain fatty acid elongase 7 (329 aa).

The next 7 helical transmembrane spans lie at 26–46, 66–86, 114–134, 146–166, 170–190, 205–225, and 233–253; these read YPLM…AYIV, LIVY…ESCI, GCWW…FFVM, VIHH…TPGG, FFGF…MLAA, LTVM…QLFF, and IGFA…FSNF.

This sequence belongs to the ELO family.

The protein resides in the membrane. It catalyses the reaction a very-long-chain acyl-CoA + malonyl-CoA + H(+) = a very-long-chain 3-oxoacyl-CoA + CO2 + CoA. Functionally, catalyzes the first and rate-limiting reaction of the four reactions that constitute the long-chain fatty acids elongation cycle. This endoplasmic reticulum-bound enzymatic process allows the addition of 2 carbons to the chain of long- and very long-chain fatty acids (VLCFAs) per cycle. The polypeptide is Very long chain fatty acid elongase 7 (Drosophila melanogaster (Fruit fly)).